A 340-amino-acid polypeptide reads, in one-letter code: Ketol-acid reductoisomerase (NADP(+)) (340 aa).

The 182-residue stretch at Met1–Thr182 folds into the KARI N-terminal Rossmann domain. NADP(+) is bound by residues Tyr24 to Gln27, Arg48, Ser51, Ser53, and Asp83 to Gln86. His108 is a catalytic residue. Gly134 lines the NADP(+) pocket. One can recognise a KARI C-terminal knotted domain in the interval Asn183–Ile329. Asp191, Glu195, Glu227, and Glu231 together coordinate Mg(2+). Ser252 contributes to the substrate binding site.

The protein belongs to the ketol-acid reductoisomerase family. Requires Mg(2+) as cofactor.

The catalysed reaction is (2R)-2,3-dihydroxy-3-methylbutanoate + NADP(+) = (2S)-2-acetolactate + NADPH + H(+). It catalyses the reaction (2R,3R)-2,3-dihydroxy-3-methylpentanoate + NADP(+) = (S)-2-ethyl-2-hydroxy-3-oxobutanoate + NADPH + H(+). The protein operates within amino-acid biosynthesis; L-isoleucine biosynthesis; L-isoleucine from 2-oxobutanoate: step 2/4. Its pathway is amino-acid biosynthesis; L-valine biosynthesis; L-valine from pyruvate: step 2/4. Its function is as follows. Involved in the biosynthesis of branched-chain amino acids (BCAA). Catalyzes an alkyl-migration followed by a ketol-acid reduction of (S)-2-acetolactate (S2AL) to yield (R)-2,3-dihydroxy-isovalerate. In the isomerase reaction, S2AL is rearranged via a Mg-dependent methyl migration to produce 3-hydroxy-3-methyl-2-ketobutyrate (HMKB). In the reductase reaction, this 2-ketoacid undergoes a metal-dependent reduction by NADPH to yield (R)-2,3-dihydroxy-isovalerate. This is Ketol-acid reductoisomerase (NADP(+)) from Roseobacter denitrificans (strain ATCC 33942 / OCh 114) (Erythrobacter sp. (strain OCh 114)).